Here is a 358-residue protein sequence, read N- to C-terminus: Vanillin synthase (358 aa).

The signal sequence occupies residues 1 to 21; it reads MARLLLLLVGVLIACAAGARA. Residues 22–140 constitute a propeptide, activation peptide; that stretch reads GSEFLAEDNP…RGNHKLTSAI (119 aa). N125 carries an N-linked (GlcNAc...) asparagine glycan. Cystine bridges form between C162–C205 and C196–C238. The active site involves C165. Residue N254 is glycosylated (N-linked (GlcNAc...) asparagine). A disulfide bridge links C296 with C346. Residues H305 and N325 contribute to the active site.

The protein belongs to the peptidase C1 family.

It catalyses the reaction (E)-ferulate + H2O = vanillin + acetate. The catalysed reaction is 4-O-beta-D-glucosyl-trans-ferulate + H2O = 4-O-beta-D-glucosyl-vanillin + acetate. It participates in aromatic compound metabolism; phenylpropanoid biosynthesis. Functionally, involved in the biosynthesis of vanillin and derivative natural products. Catalyzes the double carbon bond cleavage of ferulic acid to vanillin and of respective glucosides. The chain is Vanillin synthase from Glechoma hederacea (Ground-ivy).